The sequence spans 804 residues: QMQVFQMITKSQRIFSHAQVSKASSQLPAPEGKPAALRPLQGPWPQQLPPLAPAVDSLNAGPGNPEAEGSPARRRKTTPGVAREASPGNTRRDAKGGLKVAAVPTPLAAPSLDPSRNPDISSLAKQLRSSKGTLDLGDIFPSTGQRQTQLGGEELPGASLPGKQAPAENGAVSGTTKGEKGPPCSRGGGYRLLGNPRAPRFSGFRKEKAKMDMCCAASPSQVAMASFSSAGPPADPSKSKLTIFSRIQGGNIYRLPHPVKEENVAGGGNQQNGGSTDWTEPRSTFICKNCSQMFYTEKGLSSHMCFHSDQWPSPRGKQEPQVFGTEFCKPLRQVLRPEGDRHSPPGAKKPLDSTAAAPLVVPHSIPVVPVTRHVGSMAMEQEKDGEERDSKESSQQRKRKKRPPPKRLFIPPPPSTAGEPGPAGCHQSRLRSPMFLVDRLLKGLFQCSPYTPPPMLSPIREGSGVYFNTLCSTSTQASPDQLISSMLDQVDGSFGICVVKDDTKISIEPHINIGSRFQAEIPELQERSLAGIDEHVASLVWKPWGDMMINPETQDRVTELCNVACSSVMPGGGTNLELALHCLHEAQGNVQVALETLLLRGPHKPPTHLLADYRYTGSDVWTPIEKRLFKKAFYAHKKDFYLIHKTIQTKTVAQCVEYYYIWKKMIKFDCGRAPGLEKRVKREPEEVERTEEKVPCSPRERPSHHPIPELKIKTKSYRRESILSSSPNAGPKRTPEPSGSVESQGIFPCRECERVFDKIKSRNAHMKRHRLQDHVEPIVRVKWPVKPFQLKEEELGADIGPLQW.

Disordered regions lie at residues 21–120 and 133–197; these read SKAS…NPDI and TLDL…GNPR. The C2H2-type 1 zinc-finger motif lies at 285-307; that stretch reads FICKNCSQMFYTEKGLSSHMCFH. The interval 379 to 426 is disordered; that stretch reads MEQEKDGEERDSKESSQQRKRKKRPPPKRLFIPPPPSTAGEPGPAGCH. A compositionally biased stretch (basic and acidic residues) spans 380–395; that stretch reads EQEKDGEERDSKESSQ. Positions 396–405 are enriched in basic residues; sequence QRKRKKRPPP. Positions 509 to 601 constitute an ELM2 domain; it reads PHINIGSRFQ…VALETLLLRG (93 aa). In terms of domain architecture, SANT spans 616 to 667; that stretch reads TGSDVWTPIEKRLFKKAFYAHKKDFYLIHKTIQTKTVAQCVEYYYIWKKMIK. A disordered region spans residues 680 to 743; it reads VKREPEEVER…TPEPSGSVES (64 aa). Basic and acidic residues predominate over residues 690 to 721; that stretch reads TEEKVPCSPRERPSHHPIPELKIKTKSYRRES. A C2H2-type 2 zinc finger spans residues 747–769; the sequence is FPCRECERVFDKIKSRNAHMKRH.

Interacts with DNTTIP1. Identified in a complex with KCDT19, HDAC1 and HSPA2s. Component of a histone deacetylase complex containing DNTTIP1, ZNF541, HDAC1 and HDAC2. Identified in a complex with HDAC1, HDAC2, DNTTIP1 and KCTD19.

It is found in the nucleus. Transcription regulator which is essential for male fertility and for the completion of meiotic prophase in spermatocytes. Regulates progression of the pachytene stage of meiotic prophase by activating the expression of genes involved in meiosis and post-meiosis during spermatogenesis. Maintains the repression of pre-pachytene transcriptional programs, including meiotic double-strand breaks (DSB) formation genes in pachytene spermatocytes and suppresses aberrant DSB formation after mid-pachytene, thus ensuring meiosis progression. The protein is Zinc finger protein 541 (ZNF541) of Macaca fascicularis (Crab-eating macaque).